Reading from the N-terminus, the 397-residue chain is 42.8 kDa protein in whiE locus (397 aa).

The interval 1–22 is disordered; it reads MTVSPVVATDAPSTDATRTTAT. Over residues 8–22 the composition is skewed to low complexity; that stretch reads ATDAPSTDATRTTAT. Positions 46 to 137 constitute an ABM domain; the sequence is VRVVLMLDVH…DTHSLRYSVL (92 aa).

The protein belongs to the SchA/CurD family.

This chain is 42.8 kDa protein in whiE locus, found in Streptomyces coelicolor (strain ATCC BAA-471 / A3(2) / M145).